The chain runs to 379 residues: Epoxyqueuosine reductase (379 aa).

Aspartate 139 functions as the Proton donor in the catalytic mechanism. Residues 181–213 (IPLPVDQPVEEGCGKCVACMTICPTGAIVEPYT) enclose the 4Fe-4S ferredoxin-type domain. [4Fe-4S] cluster contacts are provided by cysteine 193, cysteine 196, cysteine 199, cysteine 203, cysteine 219, cysteine 246, cysteine 249, and cysteine 253.

It belongs to the QueG family. As to quaternary structure, monomer. The cofactor is cob(II)alamin. [4Fe-4S] cluster is required as a cofactor.

The protein resides in the cytoplasm. The catalysed reaction is epoxyqueuosine(34) in tRNA + AH2 = queuosine(34) in tRNA + A + H2O. Its pathway is tRNA modification; tRNA-queuosine biosynthesis. In terms of biological role, catalyzes the conversion of epoxyqueuosine (oQ) to queuosine (Q), which is a hypermodified base found in the wobble positions of tRNA(Asp), tRNA(Asn), tRNA(His) and tRNA(Tyr). In Shigella dysenteriae serotype 1 (strain Sd197), this protein is Epoxyqueuosine reductase.